A 353-amino-acid chain; its full sequence is Inactive ubiquitin thioesterase OTULINL (353 aa).

The interval 1-80 (MEAPRSAPRE…KWWIGYLQRK (80 aa)) is required for membrane binding. Positions 125-353 (KCVRAVKRDN…NGHHYHIPVF (229 aa)) constitute an OTU domain.

It belongs to the peptidase C65 family. Otulin subfamily. As to quaternary structure, does not bind ubiquitin or ubiquitin-like proteins.

The protein localises to the cytoplasm. Its subcellular location is the endoplasmic reticulum membrane. It is found in the nucleus envelope. Functionally, lacks deubiquitinase activity. The chain is Inactive ubiquitin thioesterase OTULINL from Mus musculus (Mouse).